Consider the following 101-residue polypeptide: Small ribosomal subunit protein uS14 (101 aa).

This sequence belongs to the universal ribosomal protein uS14 family. In terms of assembly, part of the 30S ribosomal subunit. Contacts proteins S3 and S10.

Binds 16S rRNA, required for the assembly of 30S particles and may also be responsible for determining the conformation of the 16S rRNA at the A site. The polypeptide is Small ribosomal subunit protein uS14 (Ralstonia pickettii (strain 12J)).